Here is a 125-residue protein sequence, read N- to C-terminus: Small ribosomal subunit protein uS12m (125 aa).

2 disordered regions span residues 1–50 and 106–125; these read MPTL…SAPR and GIPN…PKSI. A compositionally biased stretch (basic and acidic residues) spans 10 to 23; the sequence is HGREEKRRTDRTRA.

It belongs to the universal ribosomal protein uS12 family.

The protein localises to the mitochondrion. Its function is as follows. Protein S12 is involved in the translation initiation step. This is Small ribosomal subunit protein uS12m (RPS12) from Magnolia soulangeana (Saucer magnolia).